A 151-amino-acid polypeptide reads, in one-letter code: Small ribosomal subunit protein uS15 (151 aa).

This sequence belongs to the universal ribosomal protein uS15 family.

The protein is Small ribosomal subunit protein uS15 (RPS13) of Candida maltosa (Yeast).